The primary structure comprises 610 residues: UvrABC system protein C (610 aa).

One can recognise a GIY-YIG domain in the interval 16-94 (SQPGVYRMYD…IKLYQPRYNV (79 aa)). Residues 204–239 (DQVLTQLIARMEKASQDLAFEEAARIRDQIQAVRRV) form the UVR domain.

It belongs to the UvrC family. As to quaternary structure, interacts with UvrB in an incision complex.

It is found in the cytoplasm. In terms of biological role, the UvrABC repair system catalyzes the recognition and processing of DNA lesions. UvrC both incises the 5' and 3' sides of the lesion. The N-terminal half is responsible for the 3' incision and the C-terminal half is responsible for the 5' incision. The protein is UvrABC system protein C of Salmonella paratyphi C (strain RKS4594).